We begin with the raw amino-acid sequence, 195 residues long: Interferon tau-8 (195 aa).

The N-terminal stretch at 1–23 is a signal peptide; that stretch reads MAFVLSLLMALVLVSYGPGGSLG. 2 cysteine pairs are disulfide-bonded: C24–C122 and C52–C162.

Belongs to the alpha/beta interferon family. IFN-alphaII subfamily. As to expression, constitutively and exclusively expressed in the mononuclear cells of the extraembryonic trophectoderm.

It localises to the secreted. Functionally, paracrine hormone primarily responsible for maternal recognition of pregnancy. Interacts with endometrial receptors, probably type I interferon receptors, and blocks estrogen receptor expression, preventing the estrogen-induced increase in oxytocin receptor expression in the endometrium. This results in the suppression of the pulsatile endometrial release of the luteolytic hormone prostaglandin F2-alpha, hindering the regression of the corpus luteum (luteolysis) and therefore a return to ovarian cyclicity. This, and a possible direct effect of IFN-tau on prostaglandin synthesis, leads in turn to continued ovarian progesterone secretion, which stimulates the secretion by the endometrium of the nutrients required for the growth of the conceptus. In summary, displays particularly high antiviral and antiproliferative potency concurrently with particular weak cytotoxicity, high antiluteolytic activity and immunomodulatory properties. In contrast with other IFNs, IFN-tau is not virally inducible. This chain is Interferon tau-8 (IFNT8), found in Ovis aries (Sheep).